The chain runs to 232 residues: Clarin-2 (232 aa).

The helical transmembrane segment at 10-30 (YGLASLLSFSSFILIIVALVV) threads the bilayer. Asn48 is a glycosylation site (N-linked (GlcNAc...) asparagine). Helical transmembrane passes span 101 to 121 (ILLL…FAIL), 139 to 159 (LWNV…VAAV), and 188 to 208 (SFWI…VVAI).

Belongs to the clarin family.

The protein resides in the cell projection. The protein localises to the stereocilium membrane. In terms of biological role, plays a key role to hearing function. Required for normal organization and maintenance of the stereocilia bundle and for mechano-electrical transduction. The polypeptide is Clarin-2 (Homo sapiens (Human)).